The primary structure comprises 304 residues: Quinolinate synthase (304 aa).

H23 and S40 together coordinate iminosuccinate. C86 lines the [4Fe-4S] cluster pocket. Residues 112 to 114 (YVN) and S129 contribute to the iminosuccinate site. Residue C173 coordinates [4Fe-4S] cluster. Iminosuccinate contacts are provided by residues 199-201 (HPE) and T216. C260 provides a ligand contact to [4Fe-4S] cluster.

It belongs to the quinolinate synthase family. Type 2 subfamily. Requires [4Fe-4S] cluster as cofactor.

It localises to the cytoplasm. It catalyses the reaction iminosuccinate + dihydroxyacetone phosphate = quinolinate + phosphate + 2 H2O + H(+). It participates in cofactor biosynthesis; NAD(+) biosynthesis; quinolinate from iminoaspartate: step 1/1. Catalyzes the condensation of iminoaspartate with dihydroxyacetone phosphate to form quinolinate. The chain is Quinolinate synthase from Methanothermobacter thermautotrophicus (strain ATCC 29096 / DSM 1053 / JCM 10044 / NBRC 100330 / Delta H) (Methanobacterium thermoautotrophicum).